The following is a 271-amino-acid chain: Small ribosomal subunit protein uS2 (271 aa).

Positions 229–242 (KERKGKDAEEELKK) are enriched in basic and acidic residues. The tract at residues 229–271 (KERKGKDAEEELKKAAAPKAAPAAEAAPAAEAPAAPVVEAAAE) is disordered. Over residues 243–271 (AAAPKAAPAAEAAPAAEAPAAPVVEAAAE) the composition is skewed to low complexity.

This sequence belongs to the universal ribosomal protein uS2 family.

The sequence is that of Small ribosomal subunit protein uS2 from Nitratidesulfovibrio vulgaris (strain DSM 19637 / Miyazaki F) (Desulfovibrio vulgaris).